The chain runs to 418 residues: Tyrosine--tRNA ligase (418 aa).

Y34 lines the L-tyrosine pocket. The 'HIGH' region motif lies at P39 to H48. L-tyrosine is bound by residues Y169 and Q173. A 'KMSKS' region motif is present at residues K229–S233. ATP is bound at residue K232. The region spanning H352–Y418 is the S4 RNA-binding domain.

This sequence belongs to the class-I aminoacyl-tRNA synthetase family. TyrS type 1 subfamily. In terms of assembly, homodimer.

It is found in the cytoplasm. The enzyme catalyses tRNA(Tyr) + L-tyrosine + ATP = L-tyrosyl-tRNA(Tyr) + AMP + diphosphate + H(+). In terms of biological role, catalyzes the attachment of tyrosine to tRNA(Tyr) in a two-step reaction: tyrosine is first activated by ATP to form Tyr-AMP and then transferred to the acceptor end of tRNA(Tyr). The chain is Tyrosine--tRNA ligase from Streptococcus pyogenes serotype M1.